Consider the following 929-residue polypeptide: Bifunctional glutamine synthetase adenylyltransferase/adenylyl-removing enzyme (929 aa).

Residues 1 to 422 (MTTPISTSRA…TRHFEQIFAV (422 aa)) form an adenylyl removase region. The adenylyl transferase stretch occupies residues 429–929 (LGTFARIRPE…FQLWEDVFGT (501 aa)).

It belongs to the GlnE family. Requires Mg(2+) as cofactor.

The catalysed reaction is [glutamine synthetase]-O(4)-(5'-adenylyl)-L-tyrosine + phosphate = [glutamine synthetase]-L-tyrosine + ADP. It carries out the reaction [glutamine synthetase]-L-tyrosine + ATP = [glutamine synthetase]-O(4)-(5'-adenylyl)-L-tyrosine + diphosphate. Involved in the regulation of glutamine synthetase GlnA, a key enzyme in the process to assimilate ammonia. When cellular nitrogen levels are high, the C-terminal adenylyl transferase (AT) inactivates GlnA by covalent transfer of an adenylyl group from ATP to specific tyrosine residue of GlnA, thus reducing its activity. Conversely, when nitrogen levels are low, the N-terminal adenylyl removase (AR) activates GlnA by removing the adenylyl group by phosphorolysis, increasing its activity. The regulatory region of GlnE binds the signal transduction protein PII (GlnB) which indicates the nitrogen status of the cell. The protein is Bifunctional glutamine synthetase adenylyltransferase/adenylyl-removing enzyme of Nitrosomonas eutropha (strain DSM 101675 / C91 / Nm57).